The primary structure comprises 336 residues: Ketol-acid reductoisomerase (NADP(+)) (336 aa).

The 181-residue stretch at 2-182 (AKIYYQQDCN…GGARAGVLET (181 aa)) folds into the KARI N-terminal Rossmann domain. NADP(+)-binding positions include 25–28 (YGSQ), serine 51, serine 53, and 83–86 (DEKQ). Residue histidine 108 is part of the active site. NADP(+) is bound at residue glycine 134. The KARI C-terminal knotted domain occupies 183–328 (TFREETETDL…AELRGLMSWT (146 aa)). Mg(2+) contacts are provided by aspartate 191, glutamate 195, glutamate 227, and glutamate 231. A substrate-binding site is contributed by serine 252.

The protein belongs to the ketol-acid reductoisomerase family. Mg(2+) serves as cofactor.

It catalyses the reaction (2R)-2,3-dihydroxy-3-methylbutanoate + NADP(+) = (2S)-2-acetolactate + NADPH + H(+). The enzyme catalyses (2R,3R)-2,3-dihydroxy-3-methylpentanoate + NADP(+) = (S)-2-ethyl-2-hydroxy-3-oxobutanoate + NADPH + H(+). The protein operates within amino-acid biosynthesis; L-isoleucine biosynthesis; L-isoleucine from 2-oxobutanoate: step 2/4. It functions in the pathway amino-acid biosynthesis; L-valine biosynthesis; L-valine from pyruvate: step 2/4. Involved in the biosynthesis of branched-chain amino acids (BCAA). Catalyzes an alkyl-migration followed by a ketol-acid reduction of (S)-2-acetolactate (S2AL) to yield (R)-2,3-dihydroxy-isovalerate. In the isomerase reaction, S2AL is rearranged via a Mg-dependent methyl migration to produce 3-hydroxy-3-methyl-2-ketobutyrate (HMKB). In the reductase reaction, this 2-ketoacid undergoes a metal-dependent reduction by NADPH to yield (R)-2,3-dihydroxy-isovalerate. This Lachnoclostridium phytofermentans (strain ATCC 700394 / DSM 18823 / ISDg) (Clostridium phytofermentans) protein is Ketol-acid reductoisomerase (NADP(+)).